We begin with the raw amino-acid sequence, 407 residues long: Glucose-1-phosphate adenylyltransferase 2 (407 aa).

Residues Tyr97, Gly162, 177–178, and Ser195 contribute to the alpha-D-glucose 1-phosphate site; that span reads EK.

It belongs to the bacterial/plant glucose-1-phosphate adenylyltransferase family. In terms of assembly, homotetramer.

It carries out the reaction alpha-D-glucose 1-phosphate + ATP + H(+) = ADP-alpha-D-glucose + diphosphate. The protein operates within glycan biosynthesis; glycogen biosynthesis. Functionally, involved in the biosynthesis of ADP-glucose, a building block required for the elongation reactions to produce glycogen. Catalyzes the reaction between ATP and alpha-D-glucose 1-phosphate (G1P) to produce pyrophosphate and ADP-Glc. The polypeptide is Glucose-1-phosphate adenylyltransferase 2 (Vibrio cholerae serotype O1 (strain ATCC 39315 / El Tor Inaba N16961)).